We begin with the raw amino-acid sequence, 128 residues long: Large ribosomal subunit protein bL17 (128 aa).

The protein belongs to the bacterial ribosomal protein bL17 family. In terms of assembly, part of the 50S ribosomal subunit. Contacts protein L32.

The chain is Large ribosomal subunit protein bL17 from Enterobacter sp. (strain 638).